Consider the following 438-residue polypeptide: Serine--tRNA ligase (438 aa).

235–237 contributes to the L-serine binding site; sequence TAE. Residues 266–268 and V282 contribute to the ATP site; that span reads RKE. E289 contacts L-serine. 355–358 contacts ATP; that stretch reads ELVS. T393 is a binding site for L-serine.

The protein belongs to the class-II aminoacyl-tRNA synthetase family. Type-1 seryl-tRNA synthetase subfamily. Homodimer. The tRNA molecule binds across the dimer.

The catalysed reaction is tRNA(Ser) + L-serine + ATP = L-seryl-tRNA(Ser) + AMP + diphosphate + H(+). It carries out the reaction tRNA(Sec) + L-serine + ATP = L-seryl-tRNA(Sec) + AMP + diphosphate + H(+). It participates in aminoacyl-tRNA biosynthesis; selenocysteinyl-tRNA(Sec) biosynthesis; L-seryl-tRNA(Sec) from L-serine and tRNA(Sec): step 1/1. In terms of biological role, catalyzes the attachment of serine to tRNA(Ser). Is also able to aminoacylate tRNA(Sec) with serine, to form the misacylated tRNA L-seryl-tRNA(Sec), which will be further converted into selenocysteinyl-tRNA(Sec). This Helianthus annuus (Common sunflower) protein is Serine--tRNA ligase.